Reading from the N-terminus, the 134-residue chain is UPF0357 protein YCL012C (134 aa).

An N-terminal signal peptide occupies residues 1-23 (MKSLFYLKLLLWVVLLSLCLLMA). Ser-71 and Ser-74 each carry phosphoserine. A Glycyl lysine isopeptide (Lys-Gly) (interchain with G-Cter in ubiquitin) cross-link involves residue Lys-86.

This sequence belongs to the UPF0357 family.

In Saccharomyces cerevisiae (strain ATCC 204508 / S288c) (Baker's yeast), this protein is UPF0357 protein YCL012C.